The chain runs to 512 residues: Sporulation-regulated protein 3 (512 aa).

The interval 31–68 is disordered; sequence RQSSQGQYAVDSHPPKSPELKHRRQRSSSFVNGKCRNR. The 260-residue stretch at 106 to 365 folds into the Septin-type G domain; the sequence is NGIDFTLMVA…EKCRSEMLRT (260 aa). The segment at 116–123 is G1 motif; sequence GQSGLGKT. GTP-binding positions include 116 to 123, glycine 168, 247 to 255, and arginine 315; these read GQSGLGKT and KSDLLTKEE. A G3 motif region spans residues 165 to 168; the sequence is DTPG. Residues 246 to 249 form a G4 motif region; that stretch reads AKSD. Coiled coils occupy residues 376–406 and 451–496; these read TKSV…LKNY and RDWK…KSSN.

Belongs to the TRAFAC class TrmE-Era-EngA-EngB-Septin-like GTPase superfamily. Septin GTPase family. Interacts with other septin proteins such as SPR28 to form a ring at the bud neck.

The protein localises to the prospore membrane. The protein resides in the bud neck. Its function is as follows. Septins are GTPases involved in cytokinesis that assemble into filaments and form a ring at the cleavage site. May act by recruiting MYO1 and HOF1, a protein involved in septation, to the site of cleavage. Septins are also involved in cell morphogenesis, bud site selection, chitin deposition, cell cycle regulation, cell compartmentalization and spore wall formation. The polypeptide is Sporulation-regulated protein 3 (SPR3) (Saccharomyces cerevisiae (strain ATCC 204508 / S288c) (Baker's yeast)).